The sequence spans 246 residues: MTSATKTNNSGSISSPIVVALDYANKDAALAFADRVNPRDCRLKVGKEMFTLYGPQLVRDLHQRGFEVFLDLKFHDIPNTTARAVAAAAELGVWMVNVHATGGMRMMTAAKEALLPFGQQAPLLIAVTVLTSMDGGDLRDIGINITPAEQAERLAKLTWDCGLDGVVCSAHEAVRLKQVCGEDFKLVTPGIRPEGSDAGDQRRIMTPEQAVAAGVDYMVIGRPITQSPDPEKTLKDILASLCKGAK.

Substrate is bound by residues aspartate 22, lysine 44, 71–80, threonine 131, arginine 192, glutamine 201, glycine 221, and arginine 222; that span reads DLKFHDIPNT. Lysine 73 functions as the Proton donor in the catalytic mechanism.

It belongs to the OMP decarboxylase family. Type 1 subfamily. As to quaternary structure, homodimer.

It catalyses the reaction orotidine 5'-phosphate + H(+) = UMP + CO2. Its pathway is pyrimidine metabolism; UMP biosynthesis via de novo pathway; UMP from orotate: step 2/2. In terms of biological role, catalyzes the decarboxylation of orotidine 5'-monophosphate (OMP) to uridine 5'-monophosphate (UMP). The sequence is that of Orotidine 5'-phosphate decarboxylase from Yersinia enterocolitica serotype O:8 / biotype 1B (strain NCTC 13174 / 8081).